We begin with the raw amino-acid sequence, 178 residues long: Photosystem I assembly protein Ycf4 (178 aa).

Helical transmembrane passes span 19 to 39 (ILVA…SLSS) and 61 to 81 (LIMG…WAVI).

This sequence belongs to the Ycf4 family.

The protein resides in the cellular thylakoid membrane. In terms of biological role, seems to be required for the assembly of the photosystem I complex. The chain is Photosystem I assembly protein Ycf4 from Synechococcus sp. (strain CC9311).